The primary structure comprises 332 residues: Glycerol-3-phosphate dehydrogenase [NAD(P)+] (332 aa).

NADPH contacts are provided by Trp11, Arg30, and Lys108. Lys108, Gly137, and Ser139 together coordinate sn-glycerol 3-phosphate. Ala141 is a binding site for NADPH. Positions 192, 245, 255, 256, and 257 each coordinate sn-glycerol 3-phosphate. Lys192 functions as the Proton acceptor in the catalytic mechanism. Residue Arg256 participates in NADPH binding. 2 residues coordinate NADPH: Val280 and Glu282.

This sequence belongs to the NAD-dependent glycerol-3-phosphate dehydrogenase family.

It localises to the cytoplasm. It catalyses the reaction sn-glycerol 3-phosphate + NAD(+) = dihydroxyacetone phosphate + NADH + H(+). It carries out the reaction sn-glycerol 3-phosphate + NADP(+) = dihydroxyacetone phosphate + NADPH + H(+). The protein operates within membrane lipid metabolism; glycerophospholipid metabolism. Catalyzes the reduction of the glycolytic intermediate dihydroxyacetone phosphate (DHAP) to sn-glycerol 3-phosphate (G3P), the key precursor for phospholipid synthesis. This is Glycerol-3-phosphate dehydrogenase [NAD(P)+] from Burkholderia lata (strain ATCC 17760 / DSM 23089 / LMG 22485 / NCIMB 9086 / R18194 / 383).